A 35-amino-acid polypeptide reads, in one-letter code: Tamulustoxin (35 aa).

3 disulfides stabilise this stretch: Cys-2-Cys-22, Cys-7-Cys-31, and Cys-11-Cys-33.

As to expression, expressed by the venom gland.

The protein resides in the secreted. Functionally, blocks Kv1.6/KCNA6 potassium channels. The chain is Tamulustoxin from Hottentotta tamulus (Eastern Indian scorpion).